A 250-amino-acid chain; its full sequence is uncharacterized protein (250 aa).

A run of 7 helical transmembrane segments spans residues 36–56 (VALGLVVSGALAYATSSVPAV), 73–93 (PLYMVVAFAPLVLMLIAGFAM), 101–121 (AGALYWTIVSLIGASLGSVML), 128–148 (VAATFFVTATAFGGLSLFGYT), 156–176 (FGSFLMMGVIGLIVASIVSIF), 180–200 (PALLFAINVLGVLIFSGLIAY), and 225–245 (FGALSLYINFINLFQFLLSFF).

It belongs to the BI1 family.

The protein resides in the cell membrane. This is an uncharacterized protein from Caulobacter vibrioides (strain ATCC 19089 / CIP 103742 / CB 15) (Caulobacter crescentus).